A 71-amino-acid polypeptide reads, in one-letter code: MKADELRKLDDQQLRAKLKECYEELFNLRFQQVMGKLTATGRPRVVRRDIARIKTILRERELGIEVQETGR.

It belongs to the universal ribosomal protein uL29 family.

In Roseiflexus sp. (strain RS-1), this protein is Large ribosomal subunit protein uL29.